Reading from the N-terminus, the 137-residue chain is MLSPKRTRFRKQHRGKMKGISYRGNHICFGKYALQALEPAWITSRQIEAGRRAMTRKARRGGKFWVRIFPDKPVTVRPAETRMGSGKGCPEYWVAVVKPGRILYEMGGVTKNIARRAFSIAASKMPIRTQFIILEIE.

The protein belongs to the universal ribosomal protein uL16 family. Part of the 50S ribosomal subunit.

The protein localises to the plastid. In Cuscuta reflexa (Southern Asian dodder), this protein is Large ribosomal subunit protein uL16c.